The sequence spans 208 residues: Uracil phosphoribosyltransferase (208 aa).

5-phospho-alpha-D-ribose 1-diphosphate is bound by residues Arg78, Arg103, and 130–138 (DPMLATGGS). Residues Ile193 and 198-200 (GDA) each bind uracil. Asp199 is a 5-phospho-alpha-D-ribose 1-diphosphate binding site.

This sequence belongs to the UPRTase family. Requires Mg(2+) as cofactor.

It catalyses the reaction UMP + diphosphate = 5-phospho-alpha-D-ribose 1-diphosphate + uracil. The protein operates within pyrimidine metabolism; UMP biosynthesis via salvage pathway; UMP from uracil: step 1/1. Allosterically activated by GTP. Catalyzes the conversion of uracil and 5-phospho-alpha-D-ribose 1-diphosphate (PRPP) to UMP and diphosphate. The protein is Uracil phosphoribosyltransferase of Sodalis glossinidius (strain morsitans).